The sequence spans 319 residues: Thiamine pyrophosphokinase (319 aa).

Ser2 is subject to N-acetylserine.

It belongs to the thiamine pyrophosphokinase family. Homodimer.

The enzyme catalyses thiamine + ATP = thiamine diphosphate + AMP + H(+). It participates in cofactor biosynthesis; thiamine diphosphate biosynthesis; thiamine diphosphate from thiamine: step 1/1. Essential protein, it is the only enzyme in yeast capable of synthesizing thiamine pyrophosphate (TPP). In Saccharomyces cerevisiae (strain ATCC 204508 / S288c) (Baker's yeast), this protein is Thiamine pyrophosphokinase.